We begin with the raw amino-acid sequence, 228 residues long: Derlin-3 (228 aa).

Over 1-22 (MAGQRLAAGFLQVPAVTRAYTA) the chain is Cytoplasmic. Residues 23–43 (ACVLTTAAVQLELLSPFQLYF) traverse the membrane as a helical segment. Over 44 to 57 (NPHLVFRKFQVWRL) the chain is Lumenal. A helical transmembrane segment spans residues 58-78 (ITTFLFFGPLGFGFFFNMLFV). Residues 79–98 (FRYCRMLEEGSFRGRKADFV) are Cytoplasmic-facing. The helical transmembrane segment at 99-119 (FMFLFGGVLMTLLGFLGSLFF) threads the bilayer. The Lumenal segment spans residues 120–168 (LGQALMAMLVYVWSRRSPHVRVNFFGLLNFQAPFLPWALMGFSLLLGNS). The chain crosses the membrane as a helical span at residues 169–189 (VVTDLLGILVGHIYYFLEDVF). The Cytoplasmic segment spans residues 190–228 (PNQPGGKRLLLTPSVLKLLLDDPQEDPDYLPLPEEQPEL).

The protein belongs to the derlin family. As to quaternary structure, forms homo- and heterooligomers with DERL2 and, to a lesser extent, with DERL1. Interacts with VCP and EDEM1. Interacts with SELENOK and SELENOS. Interacts with the signal recognition particle/SRP and the SRP receptor; in the process of endoplasmic reticulum stress-induced pre-emptive quality control. As to expression, highly expressed in spleen, lung, liver, spleen and testis. Expressed at intermediate level in kidney. Weakly or not expressed in brain, heart and skeletal muscle.

Its subcellular location is the endoplasmic reticulum membrane. Its function is as follows. Functional component of endoplasmic reticulum-associated degradation (ERAD) for misfolded lumenal glycoproteins, but not that of misfolded nonglycoproteins. May act by forming a channel that allows the retrotranslocation of misfolded glycoproteins into the cytosol where they are ubiquitinated and degraded by the proteasome. May mediate the interaction between VCP and the misfolded glycoproteins. May be involved in endoplasmic reticulum stress-induced pre-emptive quality control, a mechanism that selectively attenuates the translocation of newly synthesized proteins into the endoplasmic reticulum and reroutes them to the cytosol for proteasomal degradation. The polypeptide is Derlin-3 (Mus musculus (Mouse)).